Consider the following 119-residue polypeptide: Ribonuclease P protein component (119 aa).

It belongs to the RnpA family. As to quaternary structure, consists of a catalytic RNA component (M1 or rnpB) and a protein subunit.

It carries out the reaction Endonucleolytic cleavage of RNA, removing 5'-extranucleotides from tRNA precursor.. Functionally, RNaseP catalyzes the removal of the 5'-leader sequence from pre-tRNA to produce the mature 5'-terminus. It can also cleave other RNA substrates such as 4.5S RNA. The protein component plays an auxiliary but essential role in vivo by binding to the 5'-leader sequence and broadening the substrate specificity of the ribozyme. This chain is Ribonuclease P protein component, found in Salmonella schwarzengrund (strain CVM19633).